A 649-amino-acid polypeptide reads, in one-letter code: Acid beta-fructofuranosidase (649 aa).

At 1–22 the chain is on the cytoplasmic side; that stretch reads MEHHKPLLPTSSHAAPTSSTRK. Positions 1 to 101 are cleaved as a propeptide — removed in mature form; sequence MEHHKPLLPT…NLLFAGEGGA (101 aa). A helical; Signal-anchor for type II membrane protein membrane pass occupies residues 23–43; sequence DLLFVLCGLLFLSSLVAYGGY. At 44-649 the chain is on the lumenal side; sequence RASGVPHAHL…PFPFNPDQKS (606 aa). The segment at 52–75 is disordered; it reads HLSSPTSNHQQDHQSPTSLPSSKW. Polar residues predominate over residues 54 to 72; sequence SSPTSNHQQDHQSPTSLPS. Residues 127 to 130, Gln-146, Trp-154, and 189 to 190 contribute to the substrate site; these read WMND and WT. The active site involves Asp-130. Asn-210 carries N-linked (GlcNAc...) (complex) asparagine glycosylation. Position 253–254 (253–254) interacts with substrate; the sequence is RD. The N-linked (GlcNAc...) (complex) asparagine glycan is linked to Asn-275. Substrate is bound by residues Glu-308 and Asp-341. The cysteines at positions 498 and 546 are disulfide-linked. Asn-618 carries an N-linked (GlcNAc...) (high mannose) asparagine glycan.

The protein belongs to the glycosyl hydrolase 32 family. As to quaternary structure, present in two forms, a 70 kDa monomer and a heterodimer of the 30 kDa and 38 kDa subunits. The ratio of the levels of the two forms within cells appears to be regulated developmentally.

It localises to the membrane. The protein localises to the vacuole lumen. The catalysed reaction is Hydrolysis of terminal non-reducing beta-D-fructofuranoside residues in beta-D-fructofuranosides.. The protein operates within glycan biosynthesis; sucrose metabolism. Its function is as follows. Possible role in the continued mobilization of sucrose to sink organs. The polypeptide is Acid beta-fructofuranosidase (INVA) (Vigna radiata var. radiata (Mung bean)).